The following is an 85-amino-acid chain: Beta-insect depressant toxin Lqh-dprIT3g (85 aa).

The N-terminal stretch at 1–21 (MKLLLLLTISASMLIEGLVNA) is a signal peptide. The LCN-type CS-alpha/beta domain maps to 22-82 (DGYIRGGDGC…EWDYETDTCG (61 aa)). Disulfide bonds link C31-C81, C35-C56, C42-C63, and C46-C65. G82 carries the glycine amide modification.

This sequence belongs to the long (4 C-C) scorpion toxin superfamily. Sodium channel inhibitor family. Beta subfamily. Expressed by the venom gland.

Its subcellular location is the secreted. In terms of biological role, depressant insect beta-toxins cause a transient contraction paralysis followed by a slow flaccid paralysis. They bind voltage-independently at site-4 of sodium channels (Nav) and block action potentials, primarily by depolarizing the axonal membrane and suppressing the sodium current. This depressant toxin is active only on insects. It is found in a relatively small amount in the venom. The polypeptide is Beta-insect depressant toxin Lqh-dprIT3g (Leiurus hebraeus (Hebrew deathstalker scorpion)).